The chain runs to 161 residues: Small heat shock protein ibp (161 aa).

Positions 35–150 constitute a sHSP domain; it reads EKPLSDTPAY…KPKKIFINIP (116 aa).

This sequence belongs to the small heat shock protein (HSP20) family.

This Buchnera aphidicola subsp. Schizaphis graminum (strain Sg) protein is Small heat shock protein ibp (ibp).